The chain runs to 105 residues: Large ribosomal subunit protein eL33 (105 aa).

It belongs to the eukaryotic ribosomal protein eL33 family.

Its function is as follows. The protein was found to bind to both initiator and elongator tRNAs and consequently was assigned to the P site or P and A site. In Dictyostelium discoideum (Social amoeba), this protein is Large ribosomal subunit protein eL33 (rpl35a).